The sequence spans 503 residues: Type II secretion system ATPase E (503 aa).

Zn(2+) is bound by residues C397, C400, C430, and C433.

This sequence belongs to the GSP E family. In terms of assembly, forms homooligomers; most probably hexamers. Interacts with EpsL/GspL. The cofactor is Zn(2+).

The protein resides in the cell inner membrane. It catalyses the reaction ATP + H2O + cellular proteinSide 1 = ADP + phosphate + cellular proteinSide 2.. In terms of biological role, ATPase component of the type II secretion system required for the energy-dependent secretion of extracellular factors such as proteases and toxins from the periplasm. Acts as a molecular motor to provide the energy that is required for assembly of the pseudopilus and the extrusion of substrates generated in the cytoplasm. The sequence is that of Type II secretion system ATPase E (epsE) from Vibrio cholerae serotype O1 (strain ATCC 39315 / El Tor Inaba N16961).